The chain runs to 505 residues: Lysine--tRNA ligase (505 aa).

Mg(2+)-binding residues include Glu-415 and Glu-422.

This sequence belongs to the class-II aminoacyl-tRNA synthetase family. In terms of assembly, homodimer. It depends on Mg(2+) as a cofactor.

It localises to the cytoplasm. It catalyses the reaction tRNA(Lys) + L-lysine + ATP = L-lysyl-tRNA(Lys) + AMP + diphosphate. This Salmonella typhi protein is Lysine--tRNA ligase.